Here is a 145-residue protein sequence, read N- to C-terminus: Ribonuclease H (145 aa).

An RNase H type-1 domain is found at 1–141 (MQEVELFTDG…VDELANQAMD (141 aa)). The Mg(2+) site is built by D9, E47, D69, and D133.

Belongs to the RNase H family. In terms of assembly, monomer. It depends on Mg(2+) as a cofactor.

It is found in the cytoplasm. The enzyme catalyses Endonucleolytic cleavage to 5'-phosphomonoester.. Its function is as follows. Endonuclease that specifically degrades the RNA of RNA-DNA hybrids. In Hydrogenovibrio crunogenus (strain DSM 25203 / XCL-2) (Thiomicrospira crunogena), this protein is Ribonuclease H.